Here is a 411-residue protein sequence, read N- to C-terminus: MRAHPGGGRCCPEQEEGESAAGGSGAGGDSAIEQGGQGSALAPSPVSGVRREGARGGGRGRGRWKQAGRGGGVCGRGRGRGRGRGRGRGRGRGRGRPPSGGSGLGGDGGGCGGGGSGGGGAPRREPVPFPSGSAGPGPRGPRATESGKRMDCPALPPGWKKEEVIRKSGLSAGKSDVYYFSPSGKKFRSKPQLARYLGNTVDLSSFDFRTGKMMPSKLQKNKQRLRNDPLNQNKGKPDLNTTLPIRQTASIFKQPVTKVTNHPSNKVKSDPQRMNEQPRQLFWEKRLQGLSASDVTEQIIKTMELPKGLQGVGPGSNDETLLSAVASALHTSSAPITGQVSAAVEKNPAVWLNTSQPLCKAFIVTDEDIRKQEERVQQVRKKLEEALMADILSRAADTEEMDIEMDSGDEA.

Residues 1–149 (MRAHPGGGRC…GPRATESGKR (149 aa)) form a required for interaction with DHX9 and PRMT5 region. The disordered stretch occupies residues 1-158 (MRAHPGGGRC…RMDCPALPPG (158 aa)). A compositionally biased stretch (basic residues) spans 77-95 (GRGRGRGRGRGRGRGRGRG). The segment covering 98 to 121 (PSGGSGLGGDGGGCGGGGSGGGGA) has biased composition (gly residues). Residues 145–213 (ESGKRMDCPA…SSFDFRTGKM (69 aa)) form the MBD domain. S181 carries the post-translational modification Phosphoserine. A disordered region spans residues 214–241 (MPSKLQKNKQRLRNDPLNQNKGKPDLNT). The span at 229 to 241 (PLNQNKGKPDLNT) shows a compositional bias: polar residues. Phosphoserine is present on S407.

In terms of assembly, heterodimer with MBD3 (via N-terminus). Component of the MeCP1 complex that contains HDAC1 and HDAC2. Component of the nucleosome remodeling and deacetylase (NuRD) repressor complex, composed of core proteins MTA1, MTA2, MTA3, RBBP4, RBBP7, HDAC1, HDAC2, MBD2, MBD3, and peripherally associated proteins CDK2AP1, CDK2AP2, GATAD2A, GATAD2B, CHD3, CHD4 and CHD5. The exact stoichiometry of the NuRD complex is unknown, and some subunits such as MBD2 and MBD3, GATAD2A and GATAD2B, and CHD3, CHD4 and CHD5 define mutually exclusive NuRD complexes. Interacts with CDK2AP1. Interacts with DHX9. Interacts with DNMT1. Interacts with GATAD2A/p66-alpha. Interacts with GATAD2B/p66-beta. Interacts with GPN1. Interacts with MIZF. Interacts with PRMT5. Interacts with SIN3A. Interacts with SPHK2. As to expression, highly expressed in brain, heart, kidney, stomach, testis and placenta.

The protein resides in the nucleus. The protein localises to the chromosome. Binds CpG islands in promoters where the DNA is methylated at position 5 of cytosine within CpG dinucleotides. Binds hemimethylated DNA as well. Recruits histone deacetylases and DNA methyltransferases to chromatin. Acts as a component of the histone deacetylase NuRD complex which participates in the remodeling of chromatin. Acts as a transcriptional repressor and plays a role in gene silencing. Functions as a scaffold protein, targeting GATAD2A and GATAD2B to chromatin to promote repression. May enhance the activation of some unmethylated cAMP-responsive promoters. The sequence is that of Methyl-CpG-binding domain protein 2 from Homo sapiens (Human).